The chain runs to 188 residues: Putative pre-16S rRNA nuclease (188 aa).

The disordered stretch occupies residues 144–188; the sequence is HAPGRVVAGPKGRRKARHRGQGGTGTEQQADAGGRARPHATEGKG. Basic residues predominate over residues 154-163; sequence KGRRKARHRG.

This sequence belongs to the YqgF nuclease family.

The protein resides in the cytoplasm. Its function is as follows. Could be a nuclease involved in processing of the 5'-end of pre-16S rRNA. This is Putative pre-16S rRNA nuclease from Kineococcus radiotolerans (strain ATCC BAA-149 / DSM 14245 / SRS30216).